We begin with the raw amino-acid sequence, 404 residues long: Synaptic vesicle membrane protein VAT-1 homolog (404 aa).

Positions 1-55 are disordered; it reads MSAEREATEAATVAAAAEARAETGAGEGAPSQPPTVEVASDPQPPPAPEASASAS. Serine 2 bears the N-acetylserine mark. Residue serine 2 is modified to Phosphoserine. Residues 9-24 are compositionally biased toward low complexity; it reads EAATVAAAAEARAETG. A phosphoserine mark is found at serine 31 and serine 40.

The protein belongs to the zinc-containing alcohol dehydrogenase family. Quinone oxidoreductase subfamily. In terms of assembly, interacts with MFN1 and MFN2. Ubiquitously expressed.

Its subcellular location is the cytoplasm. It is found in the mitochondrion outer membrane. In terms of biological role, plays a part in calcium-regulated keratinocyte activation in epidermal repair mechanisms. Has no effect on cell proliferation. Possesses ATPase activity. May negatively regulate mitochondrial fusion. The protein is Synaptic vesicle membrane protein VAT-1 homolog (Vat1) of Rattus norvegicus (Rat).